A 443-amino-acid polypeptide reads, in one-letter code: Glutamate-1-semialdehyde 2,1-aminomutase (443 aa).

Residue K277 is modified to N6-(pyridoxal phosphate)lysine.

The protein belongs to the class-III pyridoxal-phosphate-dependent aminotransferase family. HemL subfamily. Homodimer. It depends on pyridoxal 5'-phosphate as a cofactor.

The protein localises to the cytoplasm. The catalysed reaction is (S)-4-amino-5-oxopentanoate = 5-aminolevulinate. It participates in porphyrin-containing compound metabolism; protoporphyrin-IX biosynthesis; 5-aminolevulinate from L-glutamyl-tRNA(Glu): step 2/2. The sequence is that of Glutamate-1-semialdehyde 2,1-aminomutase from Pseudarthrobacter chlorophenolicus (strain ATCC 700700 / DSM 12829 / CIP 107037 / JCM 12360 / KCTC 9906 / NCIMB 13794 / A6) (Arthrobacter chlorophenolicus).